A 369-amino-acid chain; its full sequence is Sesquiterpene cyclase hepA (369 aa).

Mg(2+) contacts are provided by Asp-100, Asn-248, Ser-252, and Asp-256. The short motif at 100–104 (DDEID) is the DDXXD motif element. The (N,D)D(L,I,V)X(S,T)XXXE motif signature appears at 255-262 (NDLLSLRK).

The protein belongs to the terpene synthase family. Mg(2+) is required as a cofactor.

Its function is as follows. Sesquiterpene cyclase; part of the gene cluster that mediates the biosynthesis of heptelidic acid (HA), a sesquiterpene lactone that acts as an inhibitor of glyceraldehyde-3-phosphatedehydrogenase (GAPDH) and a growth inhibitor of the salt-tolerant lactic acid bacteria in soy sauce brewing. This is Sesquiterpene cyclase hepA from Aspergillus oryzae (strain ATCC 42149 / RIB 40) (Yellow koji mold).